Consider the following 23-residue polypeptide: Phallacidin proprotein (23 aa).

Pro1 is a propeptide. A cross-link (cyclopeptide (Ala-Pro)) is located at residues Ala2–Pro8. Positions Trp3 to Cys7 form a cross-link, 2'-cysteinyl-6'-hydroxytryptophan sulfoxide (Trp-Cys). A propeptide spanning residues Cys9–Lys23 is cleaved from the precursor.

The protein belongs to the MSDIN fungal toxin family. In terms of processing, processed by the macrocyclase-peptidase enzyme POPB to yield a toxic cyclic heptapeptide. POPB first removes 10 residues from the N-terminus. Conformational trapping of the remaining peptide forces the enzyme to release this intermediate rather than proceed to macrocyclization. The enzyme rebinds the remaining peptide in a different conformation and catalyzes macrocyclization of the N-terminal 7 residues.

Major toxin that belongs to the bicyclic heptapeptides called phallotoxins. Although structurally related to amatoxins, phallotoxins have a different mode of action, which is the stabilization of F-actin. Phallotoxins are poisonous when administered parenterally, but not orally because of poor absorption. This Amanita fuliginea (East Asian brown death cap) protein is Phallacidin proprotein.